Consider the following 447-residue polypeptide: Sensor protein VanSB (447 aa).

Helical transmembrane passes span valine 10–alanine 30 and glycine 137–phenylalanine 155. An HAMP domain is found at arginine 157–alanine 208. Residues alanine 230–serine 445 form the Histidine kinase domain. Histidine 233 bears the Phosphohistidine; by autocatalysis mark.

It is found in the cell membrane. It carries out the reaction ATP + protein L-histidine = ADP + protein N-phospho-L-histidine.. Member of the two-component regulatory system VanSB/VanRB. Activates the transcription of vanSB, vanYB and vanW in response to vancomycin which results in vancomycin resistance. VanSB may activate VanRB by phosphorylation. May also act as a phospho-VanRB phosphatase. The sequence is that of Sensor protein VanSB (vanSB) from Enterococcus faecalis (strain ATCC 700802 / V583).